Here is a 91-residue protein sequence, read N- to C-terminus: Small ribosomal subunit protein uS19 (91 aa).

This sequence belongs to the universal ribosomal protein uS19 family.

Functionally, protein S19 forms a complex with S13 that binds strongly to the 16S ribosomal RNA. The sequence is that of Small ribosomal subunit protein uS19 from Aromatoleum aromaticum (strain DSM 19018 / LMG 30748 / EbN1) (Azoarcus sp. (strain EbN1)).